Reading from the N-terminus, the 780-residue chain is WD repeat-containing protein 27 (780 aa).

WD repeat units follow at residues 3-56, 61-100, 111-150, 154-193, 200-236, 291-335, 342-385, 500-540, 544-582, 588-639, 644-685, 691-738, and 752-779; these read TPPE…VWSS, HQLL…MWNV, LTPR…VMDV, SVLV…VWDF, YSSS…IFSL, FPIL…LASF, HFKE…VLEI, NLSR…VFNA, GPPA…VWSV, MLLL…RYKP, KPIF…VFDL, AAVL…LWDL, and AFCT…LSQP.

The polypeptide is WD repeat-containing protein 27 (Wdr27) (Mus musculus (Mouse)).